The following is a 559-amino-acid chain: Probable D-2-hydroxyglutarate dehydrogenase, mitochondrial (559 aa).

Residues 1-80 (MARRAAAGLL…MNFEVQKRSF (80 aa)) constitute a mitochondrion transit peptide. Residues 131-310 (YKGSSQLLLL…TKIAILTPAK (180 aa)) enclose the FAD-binding PCMH-type domain.

This sequence belongs to the FAD-binding oxidoreductase/transferase type 4 family. As to quaternary structure, homodimer. It depends on FAD as a cofactor.

It is found in the mitochondrion. The catalysed reaction is (R)-2-hydroxyglutarate + A = 2-oxoglutarate + AH2. Its function is as follows. Catalyzes the oxidation of D-2-hydroxyglutarate to alpha-ketoglutarate. The sequence is that of Probable D-2-hydroxyglutarate dehydrogenase, mitochondrial (D2HGDH) from Oryza sativa subsp. japonica (Rice).